The primary structure comprises 178 residues: Small ribosomal subunit protein uS4 (178 aa).

The 63-residue stretch at 104–166 (RRLQTIVYRK…PNSPMASENH (63 aa)) folds into the S4 RNA-binding domain. Residues 158 to 178 (NSPMASENHPERTAAVSEENQ) are disordered.

It belongs to the universal ribosomal protein uS4 family. Part of the 30S ribosomal subunit. Contacts protein S5. The interaction surface between S4 and S5 is involved in control of translational fidelity.

Its function is as follows. One of the primary rRNA binding proteins, it binds directly to 16S rRNA where it nucleates assembly of the body of the 30S subunit. In terms of biological role, with S5 and S12 plays an important role in translational accuracy. This Methanococcus maripaludis (strain C5 / ATCC BAA-1333) protein is Small ribosomal subunit protein uS4.